Here is a 115-residue protein sequence, read N- to C-terminus: U3-lycotoxin-Ls1f (115 aa).

An N-terminal signal peptide occupies residues 1–20 (MKFVLLFGVLLVTLFSYSSA). Positions 21–44 (EMLDDFDQADEDELLSLIEKEEAR) are excised as a propeptide. Cystine bridges form between C48/C63, C55/C72, C62/C87, and C74/C85.

The protein belongs to the neurotoxin 19 (CSTX) family. 01 subfamily. As to expression, expressed by the venom gland.

It localises to the secreted. This chain is U3-lycotoxin-Ls1f, found in Lycosa singoriensis (Wolf spider).